A 233-amino-acid chain; its full sequence is Type IV secretion system protein PtlE homolog (233 aa).

Residues 42 to 62 (VAWAALAVTALSLIAIATMLP) traverse the membrane as a helical segment.

It belongs to the virB8 family.

The protein localises to the cell inner membrane. The polypeptide is Type IV secretion system protein PtlE homolog (ptlE) (Bordetella parapertussis (strain 12822 / ATCC BAA-587 / NCTC 13253)).